The primary structure comprises 421 residues: Glucose-1-phosphate adenylyltransferase (421 aa).

Alpha-D-glucose 1-phosphate contacts are provided by residues tyrosine 109, glycine 175, 190-191, and serine 208; that span reads EK.

Belongs to the bacterial/plant glucose-1-phosphate adenylyltransferase family. As to quaternary structure, homotetramer.

It carries out the reaction alpha-D-glucose 1-phosphate + ATP + H(+) = ADP-alpha-D-glucose + diphosphate. Its pathway is glycan biosynthesis; glycogen biosynthesis. Its function is as follows. Involved in the biosynthesis of ADP-glucose, a building block required for the elongation reactions to produce glycogen. Catalyzes the reaction between ATP and alpha-D-glucose 1-phosphate (G1P) to produce pyrophosphate and ADP-Glc. The polypeptide is Glucose-1-phosphate adenylyltransferase (Teredinibacter turnerae (strain ATCC 39867 / T7901)).